A 293-amino-acid chain; its full sequence is Protease HtpX homolog (293 aa).

The next 2 helical transmembrane spans lie at 4–24 (IFLF…VLSL) and 39–59 (PMLL…SLLI). His-144 is a Zn(2+) binding site. Glu-145 is an active-site residue. His-148 is a Zn(2+) binding site. The next 2 membrane-spanning stretches (helical) occupy residues 159–179 (LVQG…GYFV) and 200–220 (ITVL…VAWF). Residue Glu-225 participates in Zn(2+) binding.

This sequence belongs to the peptidase M48B family. The cofactor is Zn(2+).

Its subcellular location is the cell inner membrane. This chain is Protease HtpX homolog, found in Herminiimonas arsenicoxydans.